A 345-amino-acid polypeptide reads, in one-letter code: Phenylalanine--tRNA ligase alpha subunit (345 aa).

E266 lines the Mg(2+) pocket.

The protein belongs to the class-II aminoacyl-tRNA synthetase family. Phe-tRNA synthetase alpha subunit type 1 subfamily. Tetramer of two alpha and two beta subunits. It depends on Mg(2+) as a cofactor.

Its subcellular location is the cytoplasm. The enzyme catalyses tRNA(Phe) + L-phenylalanine + ATP = L-phenylalanyl-tRNA(Phe) + AMP + diphosphate + H(+). The polypeptide is Phenylalanine--tRNA ligase alpha subunit (Burkholderia lata (strain ATCC 17760 / DSM 23089 / LMG 22485 / NCIMB 9086 / R18194 / 383)).